Here is a 119-residue protein sequence, read N- to C-terminus: Large ribosomal subunit protein uL22 (119 aa).

Belongs to the universal ribosomal protein uL22 family. Part of the 50S ribosomal subunit.

Its function is as follows. This protein binds specifically to 23S rRNA; its binding is stimulated by other ribosomal proteins, e.g. L4, L17, and L20. It is important during the early stages of 50S assembly. It makes multiple contacts with different domains of the 23S rRNA in the assembled 50S subunit and ribosome. Functionally, the globular domain of the protein is located near the polypeptide exit tunnel on the outside of the subunit, while an extended beta-hairpin is found that lines the wall of the exit tunnel in the center of the 70S ribosome. The chain is Large ribosomal subunit protein uL22 from Rickettsia akari (strain Hartford).